The primary structure comprises 681 residues: Probable L-type lectin-domain containing receptor kinase S.7 (681 aa).

An N-terminal signal peptide occupies residues methionine 1–serine 21. Over lysine 22–asparagine 305 the chain is Extracellular. The interval asparagine 30 to lysine 265 is legume-lectin like. N-linked (GlcNAc...) asparagine glycosylation is found at asparagine 32, asparagine 42, asparagine 86, asparagine 121, asparagine 135, asparagine 261, and asparagine 281. Residues leucine 306–glycine 326 form a helical membrane-spanning segment. The Cytoplasmic portion of the chain corresponds to tyrosine 327–serine 681. Residues phenylalanine 365–isoleucine 643 form the Protein kinase domain. Residues isoleucine 371–valine 379 and lysine 394 each bind ATP. Catalysis depends on aspartate 493, which acts as the Proton acceptor.

In the C-terminal section; belongs to the protein kinase superfamily. Ser/Thr protein kinase family. The protein in the N-terminal section; belongs to the leguminous lectin family.

It is found in the cell membrane. The enzyme catalyses L-seryl-[protein] + ATP = O-phospho-L-seryl-[protein] + ADP + H(+). The catalysed reaction is L-threonyl-[protein] + ATP = O-phospho-L-threonyl-[protein] + ADP + H(+). Functionally, involved in resistance response to the pathogenic oomycetes Phytophthora infestans and Phytophthora capsici. The chain is Probable L-type lectin-domain containing receptor kinase S.7 from Arabidopsis thaliana (Mouse-ear cress).